We begin with the raw amino-acid sequence, 332 residues long: UPF0194 membrane protein YbhG (332 aa).

The signal sequence occupies residues 1–16; the sequence is MMKKPVVIGLAVVVLA. A coiled-coil region spans residues 108 to 209; sequence EEIAQAAAAV…LNLQDSTLIA (102 aa).

The protein belongs to the UPF0194 family.

Its subcellular location is the periplasm. This chain is UPF0194 membrane protein YbhG, found in Escherichia coli O127:H6 (strain E2348/69 / EPEC).